A 121-amino-acid chain; its full sequence is ATP synthase epsilon chain (121 aa).

Belongs to the ATPase epsilon chain family. As to quaternary structure, F-type ATPases have 2 components, CF(1) - the catalytic core - and CF(0) - the membrane proton channel. CF(1) has five subunits: alpha(3), beta(3), gamma(1), delta(1), epsilon(1). CF(0) has three main subunits: a, b and c.

Its subcellular location is the cell membrane. Produces ATP from ADP in the presence of a proton gradient across the membrane. The protein is ATP synthase epsilon chain of Mycolicibacterium smegmatis (strain ATCC 700084 / mc(2)155) (Mycobacterium smegmatis).